The following is a 315-amino-acid chain: Putative heme-binding peroxidase (315 aa).

Catalysis depends on His40, which acts as the Proton acceptor. His169 is a binding site for heme b. Trp185 (tryptophan radical intermediate) is an active-site residue. Residues 267–286 (EEGKPLDKTAPPAGDETCPV) form a disordered region.

This sequence belongs to the peroxidase family. Cytochrome c peroxidase subfamily. Requires heme b as cofactor.

Its function is as follows. Destroys radicals which are normally produced within the cells and which are toxic to biological systems. This chain is Putative heme-binding peroxidase, found in Cryptococcus neoformans var. neoformans serotype D (strain B-3501A) (Filobasidiella neoformans).